Here is a 389-residue protein sequence, read N- to C-terminus: 23S rRNA (uracil(747)-C(5))-methyltransferase RlmC (389 aa).

Residues cysteine 12, cysteine 20, cysteine 23, and cysteine 99 each contribute to the [4Fe-4S] cluster site. Glutamine 224, phenylalanine 253, glutamate 274, and asparagine 321 together coordinate S-adenosyl-L-methionine. Cysteine 348 acts as the Nucleophile in catalysis.

It belongs to the class I-like SAM-binding methyltransferase superfamily. RNA M5U methyltransferase family. RlmC subfamily.

It carries out the reaction uridine(747) in 23S rRNA + S-adenosyl-L-methionine = 5-methyluridine(747) in 23S rRNA + S-adenosyl-L-homocysteine + H(+). Catalyzes the formation of 5-methyl-uridine at position 747 (m5U747) in 23S rRNA. This Shewanella putrefaciens (strain CN-32 / ATCC BAA-453) protein is 23S rRNA (uracil(747)-C(5))-methyltransferase RlmC.